The primary structure comprises 94 residues: Acylphosphatase (94 aa).

Residues 7–94 enclose the Acylphosphatase-like domain; it reads AALVRITGRV…EAPAGFRITR (88 aa). Catalysis depends on residues Arg-22 and Asn-40.

The protein belongs to the acylphosphatase family.

It carries out the reaction an acyl phosphate + H2O = a carboxylate + phosphate + H(+). In Sinorhizobium medicae (strain WSM419) (Ensifer medicae), this protein is Acylphosphatase (acyP).